The sequence spans 721 residues: Transcription activator of gluconeogenesis ARB_05058 (721 aa).

Over residues 1–34 (MSPHQTTGQESDNMTVNGENAQASSQYIQSNEEM) the composition is skewed to polar residues. Positions 1–62 (MSPHQTTGQE…PSRPKRKKAK (62 aa)) are disordered. A compositionally biased stretch (basic and acidic residues) spans 40–55 (TEKKASTAKAAKDPSR). A DNA-binding region (zn(2)-C6 fungal-type) is located at residues 65–93 (CYACQRGHLTCGDERPCQRCIKRGFQDAC). 5 disordered regions span residues 128–224 (QNNA…FNSA), 263–300 (GDTP…SNQA), 353–400 (SPAS…TPQL), 533–567 (NHNV…YNSS), and 635–666 (GLNG…QRRW). Composition is skewed to polar residues over residues 133–213 (GSNT…TPSA), 267–277 (PSESGAQRGSI), 287–300 (LTGS…SNQA), and 361–379 (MMTT…GAFN). Composition is skewed to low complexity over residues 380–399 (SRQN…STPQ) and 543–553 (GLMTGSTSRGS). The span at 640-661 (AASNETNELNGSLTNGATTNGR) shows a compositional bias: polar residues.

Belongs to the ERT1/acuK family.

The protein resides in the nucleus. Its function is as follows. Transcription factor which regulates nonfermentable carbon utilization. Activator of gluconeogenetic genes. This is Transcription activator of gluconeogenesis ARB_05058 from Arthroderma benhamiae (strain ATCC MYA-4681 / CBS 112371) (Trichophyton mentagrophytes).